A 312-amino-acid chain; its full sequence is Serine/threonine-protein phosphatase CPPED1 (312 aa).

At Ser2 the chain carries Phosphoserine. Residues 47–250 form a catalytic region; it reads KAWSTGNCDA…AVFSGHYHRN (204 aa). Residues Asp90, Asn127, and His246 each coordinate a divalent metal cation. Ser293 is subject to Phosphoserine.

The protein belongs to the metallophosphoesterase superfamily. CPPED1 family. It depends on a divalent metal cation as a cofactor.

It localises to the cytoplasm. It catalyses the reaction O-phospho-L-seryl-[protein] + H2O = L-seryl-[protein] + phosphate. The enzyme catalyses O-phospho-L-threonyl-[protein] + H2O = L-threonyl-[protein] + phosphate. Functionally, protein phosphatase that dephosphorylates AKT family kinase specifically at 'Ser-473', blocking cell cycle progression and promoting cell apoptosis. May play an inhibitory role in glucose uptake by adipocytes. This Mus musculus (Mouse) protein is Serine/threonine-protein phosphatase CPPED1 (Cpped1).